Here is a 415-residue protein sequence, read N- to C-terminus: CCA-adding enzyme (415 aa).

ATP-binding residues include S52 and R55. CTP is bound by residues S52 and R55. 3 residues coordinate Mg(2+): D64, D66, and D116. The ATP site is built by H139, K159, and Y168. CTP-binding residues include H139, K159, and Y168.

This sequence belongs to the tRNA nucleotidyltransferase/poly(A) polymerase family. Archaeal CCA-adding enzyme subfamily. As to quaternary structure, homodimer. The cofactor is Mg(2+).

It catalyses the reaction a tRNA precursor + 2 CTP + ATP = a tRNA with a 3' CCA end + 3 diphosphate. The catalysed reaction is a tRNA with a 3' CCA end + 2 CTP + ATP = a tRNA with a 3' CCACCA end + 3 diphosphate. Catalyzes the addition and repair of the essential 3'-terminal CCA sequence in tRNAs without using a nucleic acid template. Adds these three nucleotides in the order of C, C, and A to the tRNA nucleotide-73, using CTP and ATP as substrates and producing inorganic pyrophosphate. tRNA 3'-terminal CCA addition is required both for tRNA processing and repair. Also involved in tRNA surveillance by mediating tandem CCA addition to generate a CCACCA at the 3' terminus of unstable tRNAs. While stable tRNAs receive only 3'-terminal CCA, unstable tRNAs are marked with CCACCA and rapidly degraded. This Pyrobaculum neutrophilum (strain DSM 2338 / JCM 9278 / NBRC 100436 / V24Sta) (Thermoproteus neutrophilus) protein is CCA-adding enzyme.